A 575-amino-acid polypeptide reads, in one-letter code: Dihydroxy-acid dehydratase (575 aa).

Residues 1-27 (MSNQERQERPEKDPDLRSTEVTEGYEK) are disordered. Cysteine 61 is a binding site for [2Fe-2S] cluster. Aspartate 93 lines the Mg(2+) pocket. Cysteine 134 contacts [2Fe-2S] cluster. Mg(2+) is bound by residues aspartate 135 and lysine 136. Residue lysine 136 is modified to N6-carboxylysine. Cysteine 206 is a [2Fe-2S] cluster binding site. Glutamate 460 serves as a coordination point for Mg(2+). The active-site Proton acceptor is serine 486.

It belongs to the IlvD/Edd family. Homodimer. Requires [2Fe-2S] cluster as cofactor. The cofactor is Mg(2+).

The catalysed reaction is (2R)-2,3-dihydroxy-3-methylbutanoate = 3-methyl-2-oxobutanoate + H2O. It catalyses the reaction (2R,3R)-2,3-dihydroxy-3-methylpentanoate = (S)-3-methyl-2-oxopentanoate + H2O. The protein operates within amino-acid biosynthesis; L-isoleucine biosynthesis; L-isoleucine from 2-oxobutanoate: step 3/4. It functions in the pathway amino-acid biosynthesis; L-valine biosynthesis; L-valine from pyruvate: step 3/4. Functions in the biosynthesis of branched-chain amino acids. Catalyzes the dehydration of (2R,3R)-2,3-dihydroxy-3-methylpentanoate (2,3-dihydroxy-3-methylvalerate) into 2-oxo-3-methylpentanoate (2-oxo-3-methylvalerate) and of (2R)-2,3-dihydroxy-3-methylbutanoate (2,3-dihydroxyisovalerate) into 2-oxo-3-methylbutanoate (2-oxoisovalerate), the penultimate precursor to L-isoleucine and L-valine, respectively. In Haloarcula marismortui (strain ATCC 43049 / DSM 3752 / JCM 8966 / VKM B-1809) (Halobacterium marismortui), this protein is Dihydroxy-acid dehydratase.